We begin with the raw amino-acid sequence, 387 residues long: Methyltransferase phomM' (387 aa).

The tract at residues 98–223 is methyltransferase domain; it reads PHRPKDLHIL…QSVADLFTTL (126 aa).

Belongs to the class I-like SAM-binding methyltransferase superfamily. Erg6/SMT family.

Its pathway is mycotoxin biosynthesis. In terms of biological role, methyltransferase; part of the gene cluster that mediates the biosynthesis of the phomopsins, a group of hexapeptide mycotoxins which infects lupins and causes lupinosis disease in livestock. Within the pathway, phomM' acts as an S-adenosylmethionine-dependent alpha-N-methyltransferase that catalyzes two successive N-methylation reactions, converting N-desmethyl-phomopsin A to phomopsin A and phomopsin A further to an N,N-dimethylated congener called phomopsin E. The pathway starts with the processing of the precursor phomA' by several endopeptidases including kexin proteases as well as the cluster-specific S41 family peptidase phomP1 and the oligopeptidase phomG' to produce 10 identical copies of the hexapeptide Tyr-Val-Ile-Pro-Ile-Asp. After being excised from the precursor peptide, the core peptides are cyclized and modified post-translationally by enzymes encoded within the gene cluster. The timing and order of proteolysis of the phomA' precursor and PTMs are still unknown. Two tyrosinase-like enzymes, phomQ1' and phomQ2, catalyze the chlorination and hydroxylation of Tyr, respectively. PhomYb, is proposed to be involved in the construction of the macrocyclic structure. The other 4 ustYa family proteins may be involved in PTMs that generate the unique structure of phomopsin A. PhomYa' is required for the hydroxylation of C-beta of Tyr. PhomYc', phomYd', and phomYe are responsible for the biosynthesis of 2,3-dehydroisoleucine (dIle), 2,3-dehydroaspartic acid (dAsp), and 3,4-dehydroproline (dPro), respectively. While dIle formation by phomYc' is indispensable for the installation of dAsp by phomYd', the order of the other PTMs have not been elucidated yet. Most of the biosynthetic enzymes likely have broad substrate specificity, and thus, there might be a metabolic grid from a precursor to phomopsin A. The enzyme(s) responsible for the biosynthesis of 3,4-dehydrovaline (dVal) have also not been identified yet. Finally, phomM' acts as an S-adenosylmethionine-dependent alpha-N-methyltransferase that catalyzes two successive N-methylation reactions, converting N-desmethyl-phomopsin A to phomopsin A and phomopsin A further to an N,N-dimethylated congener called phomopsin E. The sequence is that of Methyltransferase phomM' from Diaporthe leptostromiformis (Lupinosis disease fungus).